The chain runs to 590 residues: V-type ATP synthase alpha chain (590 aa).

232 to 239 (GPFGSGKT) contributes to the ATP binding site.

This sequence belongs to the ATPase alpha/beta chains family.

It carries out the reaction ATP + H2O + 4 H(+)(in) = ADP + phosphate + 5 H(+)(out). In terms of biological role, produces ATP from ADP in the presence of a proton gradient across the membrane. The V-type alpha chain is a catalytic subunit. The sequence is that of V-type ATP synthase alpha chain from Thermoanaerobacter pseudethanolicus (strain ATCC 33223 / 39E) (Clostridium thermohydrosulfuricum).